The primary structure comprises 456 residues: Flagellum-specific ATP synthase (456 aa).

182–189 provides a ligand contact to ATP; sequence AGSGVGKS.

This sequence belongs to the ATPase alpha/beta chains family.

The protein localises to the cytoplasm. The catalysed reaction is ATP + H2O + 4 H(+)(in) = ADP + phosphate + 5 H(+)(out). Functionally, probable catalytic subunit of a protein translocase for flagellum-specific export, or a proton translocase involved in local circuits at the flagellum. May be involved in a specialized protein export pathway that proceeds without signal peptide cleavage. This is Flagellum-specific ATP synthase (fliI) from Salmonella typhimurium (strain LT2 / SGSC1412 / ATCC 700720).